We begin with the raw amino-acid sequence, 382 residues long: 8-amino-7-oxononanoate synthase (382 aa).

Residues Arg-22 and Arg-29 each contribute to the substrate site. 109 to 110 contributes to the pyridoxal 5'-phosphate binding site; sequence GF. Residue His-134 coordinates substrate. Pyridoxal 5'-phosphate contacts are provided by residues Ser-182, 207–210, and 233–236; these read DDAH and TLSK. The residue at position 236 (Lys-236) is an N6-(pyridoxal phosphate)lysine. Thr-345 serves as a coordination point for substrate.

This sequence belongs to the class-II pyridoxal-phosphate-dependent aminotransferase family. BioF subfamily. In terms of assembly, homodimer. Pyridoxal 5'-phosphate is required as a cofactor.

It carries out the reaction 6-carboxyhexanoyl-[ACP] + L-alanine + H(+) = (8S)-8-amino-7-oxononanoate + holo-[ACP] + CO2. It functions in the pathway cofactor biosynthesis; biotin biosynthesis. Catalyzes the decarboxylative condensation of pimeloyl-[acyl-carrier protein] and L-alanine to produce 8-amino-7-oxononanoate (AON), [acyl-carrier protein], and carbon dioxide. The protein is 8-amino-7-oxononanoate synthase of Granulibacter bethesdensis (strain ATCC BAA-1260 / CGDNIH1).